The primary structure comprises 769 residues: MEVPVDFPISWPCCDTLHAVDPLISLYGVSQKRDEECTHILNASYQSWYPQAVSYNRGSMDASYYFSFSLPWNLPSYIQYLVRPNDPIAVRPTQVLNVRAQQIAEFSGSSESQDRLGHRAKEKLLDREFFLSLLSSASTKREAKSYLARLKASPAKSGQEPTESPKESISASLPSGVNLGSFYGASRAVYDSPVFRQDTTPTPRAQDIPERLHLALIKITTPQLLDNSVINGVAKTLSQLVRLGMACCVVVDPGKTDGHAGRQTAIEQANRISAAVDEQPDSRSFRLDSALSISERGSGLPTVLSRKVLLSALQDGHVVLVPPIAYTEENPRAVTVSANDAALALTKEFAGLSFNPDPDEDPAVTAERIRNLQREVSLDRVIVLDALGGIPAFKGPQSSHVFINMEQEFDQIKDELSQVRNSVSSKQGTSEATYSTLESNPFSKFVNRELVLPEKPTAPPSPGAEVMEEVLDGHLENLRLAQQALAMLPSASSGIITSPQEVSYSARSPQQAASDLSAVGTRRQRNPLIHHLLTDKPLLSSSLPPGRRGAFNGSGSNQFNPVTSHTTFVKRGMPLTILPNPYTKPWRAQMQPRLGLNDPTIDLPRLVTLIEDSFDRKLDVQNYLERVNSRIAGVIVAGEYEGGAILTWETPPGVPDDGSEASAARMVPYLDKFAVLKRSQGAGGVADVVFNAMVRTCFPNGVCWRSRMDNPVNKWYFERSSGTWKLAGSNWAMFWTTPGLVEDTQRFQDYEAVCRSIQPSWADKKNVID.

The segment at 150-172 (LKASPAKSGQEPTESPKESISAS) is disordered. Positions 159-172 (QEPTESPKESISAS) are enriched in polar residues. An N-acetyltransferase domain is found at 590 to 759 (MQPRLGLNDP…YEAVCRSIQP (170 aa)).

It belongs to the acetyltransferase family.

It localises to the mitochondrion. The enzyme catalyses L-glutamate + acetyl-CoA = N-acetyl-L-glutamate + CoA + H(+). It participates in amino-acid biosynthesis; L-arginine biosynthesis; N(2)-acetyl-L-ornithine from L-glutamate: step 1/4. In terms of biological role, N-acetylglutamate synthase involved in arginine biosynthesis. The polypeptide is Amino-acid acetyltransferase, mitochondrial (arg2) (Penicillium rubens (strain ATCC 28089 / DSM 1075 / NRRL 1951 / Wisconsin 54-1255) (Penicillium chrysogenum)).